The chain runs to 362 residues: E3 ubiquitin-protein ligase TM129 (362 aa).

At 1 to 6 (MDSPEV) the chain is on the lumenal side. Residues 7-27 (TFTLAYLVFAVCFVFTPNEFY) form a helical membrane-spanning segment. The Cytoplasmic segment spans residues 28 to 56 (SAGLTVQNLLSGWLGSEDAAFVPYHLRRT). Residues 57 to 77 (SATLLCHSLLPLGYYMGMCFA) traverse the membrane as a helical segment. Residues 78-94 (ASEKQLYSPGQAPEAWQ) are Lumenal-facing. The helical transmembrane segment at 95 to 115 (LFLLLAVTLPLLSCTLIYYWS) threads the bilayer. Topologically, residues 116 to 362 (WDRWTRHPLA…FCILDVCCVR (247 aa)) are cytoplasmic. The segment at 285–350 (CIGCMQTRAS…ASRVPCPTCR (66 aa)) adopts an RING-type; degenerate zinc-finger fold.

It belongs to the TMEM129 family. Integral component of ER-resident dislocation complexes.

It localises to the endoplasmic reticulum membrane. The enzyme catalyses S-ubiquitinyl-[E2 ubiquitin-conjugating enzyme]-L-cysteine + [acceptor protein]-L-lysine = [E2 ubiquitin-conjugating enzyme]-L-cysteine + N(6)-ubiquitinyl-[acceptor protein]-L-lysine.. It functions in the pathway protein modification; protein ubiquitination. E3 ubiquitin-protein ligase involved in ER-associated protein degradation, preferentially associates with the E2 enzyme UBE2J2. Exploited by viral US11 proteins to mediate HLA class I proteins degradation. In Mus musculus (Mouse), this protein is E3 ubiquitin-protein ligase TM129 (Tmem129).